We begin with the raw amino-acid sequence, 466 residues long: Ribulose bisphosphate carboxylase large chain (466 aa).

Lysine 5 bears the N6,N6,N6-trimethyllysine mark. Residues asparagine 114 and threonine 164 each contribute to the substrate site. Lysine 166 functions as the Proton acceptor in the catalytic mechanism. Lysine 168 serves as a coordination point for substrate. Residues lysine 192, aspartate 194, and glutamate 195 each contribute to the Mg(2+) site. Lysine 192 bears the N6-carboxylysine mark. Histidine 285 functions as the Proton acceptor in the catalytic mechanism. Arginine 286, histidine 318, and serine 370 together coordinate substrate.

This sequence belongs to the RuBisCO large chain family. Type I subfamily. As to quaternary structure, heterohexadecamer of 8 large chains and 8 small chains; disulfide-linked. The disulfide link is formed within the large subunit homodimers. Mg(2+) is required as a cofactor. The disulfide bond which can form in the large chain dimeric partners within the hexadecamer appears to be associated with oxidative stress and protein turnover.

Its subcellular location is the plastid. The protein localises to the chloroplast. It carries out the reaction 2 (2R)-3-phosphoglycerate + 2 H(+) = D-ribulose 1,5-bisphosphate + CO2 + H2O. It catalyses the reaction D-ribulose 1,5-bisphosphate + O2 = 2-phosphoglycolate + (2R)-3-phosphoglycerate + 2 H(+). Functionally, ruBisCO catalyzes two reactions: the carboxylation of D-ribulose 1,5-bisphosphate, the primary event in carbon dioxide fixation, as well as the oxidative fragmentation of the pentose substrate in the photorespiration process. Both reactions occur simultaneously and in competition at the same active site. This Thespesia populnea (Portia tree) protein is Ribulose bisphosphate carboxylase large chain.